The following is a 244-amino-acid chain: Leucyl/phenylalanyl-tRNA--protein transferase (244 aa).

A disordered region spans residues 1-22 (MHSQPYLLSPAPNNTPFPPAEH).

This sequence belongs to the L/F-transferase family.

The protein resides in the cytoplasm. It carries out the reaction N-terminal L-lysyl-[protein] + L-leucyl-tRNA(Leu) = N-terminal L-leucyl-L-lysyl-[protein] + tRNA(Leu) + H(+). The enzyme catalyses N-terminal L-arginyl-[protein] + L-leucyl-tRNA(Leu) = N-terminal L-leucyl-L-arginyl-[protein] + tRNA(Leu) + H(+). It catalyses the reaction L-phenylalanyl-tRNA(Phe) + an N-terminal L-alpha-aminoacyl-[protein] = an N-terminal L-phenylalanyl-L-alpha-aminoacyl-[protein] + tRNA(Phe). In terms of biological role, functions in the N-end rule pathway of protein degradation where it conjugates Leu, Phe and, less efficiently, Met from aminoacyl-tRNAs to the N-termini of proteins containing an N-terminal arginine or lysine. The protein is Leucyl/phenylalanyl-tRNA--protein transferase of Xylella fastidiosa (strain M12).